A 122-amino-acid chain; its full sequence is Chorismate mutase AroH (122 aa).

Residues 2–120 (VRGIRGAITV…AVRLRPDLES (119 aa)) form the Chorismate mutase aroH-type domain. 3 residues coordinate prephenate: R6, R89, and Y107.

As to quaternary structure, homotrimer.

Its subcellular location is the cytoplasm. The enzyme catalyses chorismate = prephenate. It functions in the pathway metabolic intermediate biosynthesis; prephenate biosynthesis; prephenate from chorismate: step 1/1. Its activity is regulated as follows. Inhibited by 40% with 500 uM tyrosine, and a tyrosine concentration as high as 5 mM reduced activity to 5%. In terms of biological role, catalyzes the Claisen rearrangement of chorismate to prephenate. Probably involved in the aromatic amino acid biosynthesis. The chain is Chorismate mutase AroH from Thermus thermophilus.